Consider the following 257-residue polypeptide: MLAKRIIPCLDVKDGQVVKGVQFRNHEIVGDIVPLAKRYAEEGADELVFYDITASSDARVVDKSWVSRVAEVIDIPFCVAGGIKTIDDARRILEFGADKVSINSPALADPSLINRLSEKFGVQCIVIGIDSYFDKETGLYQVKQFTGNEKATLTTKWNTFDWIKEVQSRGAGEIVLNVMNQDGVRCGYDIDQLTQARAVCNVPLIASGGAGEMVHFAEVFKQADVDGALAASVFHKQIINIGELKAYLKTQQVEIRL.

Catalysis depends on residues Asp-11 and Asp-130.

This sequence belongs to the HisA/HisF family. As to quaternary structure, heterodimer of HisH and HisF.

The protein localises to the cytoplasm. It carries out the reaction 5-[(5-phospho-1-deoxy-D-ribulos-1-ylimino)methylamino]-1-(5-phospho-beta-D-ribosyl)imidazole-4-carboxamide + L-glutamine = D-erythro-1-(imidazol-4-yl)glycerol 3-phosphate + 5-amino-1-(5-phospho-beta-D-ribosyl)imidazole-4-carboxamide + L-glutamate + H(+). Its pathway is amino-acid biosynthesis; L-histidine biosynthesis; L-histidine from 5-phospho-alpha-D-ribose 1-diphosphate: step 5/9. IGPS catalyzes the conversion of PRFAR and glutamine to IGP, AICAR and glutamate. The HisF subunit catalyzes the cyclization activity that produces IGP and AICAR from PRFAR using the ammonia provided by the HisH subunit. The chain is Imidazole glycerol phosphate synthase subunit HisF from Psychromonas ingrahamii (strain DSM 17664 / CCUG 51855 / 37).